We begin with the raw amino-acid sequence, 505 residues long: Phosphoethanolamine N-methyltransferase (505 aa).

Residues glycine 76, arginine 81, aspartate 97, aspartate 122, valine 123, and asparagine 141 each coordinate S-adenosyl-L-homocysteine. Serine 174, serine 179, glycine 180, arginine 184, and tyrosine 191 together coordinate phosphocholine. Residues 260-261 and tyrosine 269 contribute to the N-methylethanolamine phosphate site; that span reads QY. Tyrosine 269 serves as a coordination point for phosphocholine. S-adenosyl-L-homocysteine is bound by residues valine 278, serine 279, glycine 305, aspartate 327, aspartate 353, cysteine 354, and arginine 370. Phosphocholine is bound by residues tyrosine 401, tyrosine 415, arginine 419, tyrosine 421, and lysine 487. Residues tyrosine 401, tyrosine 415, 419-421, and lysine 487 each bind N-methylethanolamine phosphate; that span reads RGY.

This sequence belongs to the class I-like SAM-binding methyltransferase superfamily. PEAMT family.

The enzyme catalyses phosphoethanolamine + S-adenosyl-L-methionine = N-methylethanolamine phosphate + S-adenosyl-L-homocysteine + H(+). It carries out the reaction N-methylethanolamine phosphate + S-adenosyl-L-methionine = N,N-dimethylethanolamine phosphate + S-adenosyl-L-homocysteine + H(+). The catalysed reaction is N,N-dimethylethanolamine phosphate + S-adenosyl-L-methionine = phosphocholine + S-adenosyl-L-homocysteine + H(+). Its pathway is phospholipid metabolism; phosphatidylcholine biosynthesis; phosphocholine from phosphoethanolamine: step 1/1. With respect to regulation, inhibited by phosphatidic acid. Involved in phosphocholine biosynthesis. Catalyzes the N-methylation of phosphoethanolamine, phosphomonomethylethanolamine and phosphodimethylethanolamine, the three methylation steps required to convert phosphoethanolamine to phosphocholine (PC). This is Phosphoethanolamine N-methyltransferase from Triticum aestivum (Wheat).